A 184-amino-acid polypeptide reads, in one-letter code: Ribosome-recycling factor (184 aa).

The tract at residues 134–167 is disordered; the sequence is MNDQLKKDEKNGDITEDELRSGTEDVQKATDNSI.

Belongs to the RRF family.

It is found in the cytoplasm. Its function is as follows. Responsible for the release of ribosomes from messenger RNA at the termination of protein biosynthesis. May increase the efficiency of translation by recycling ribosomes from one round of translation to another. The sequence is that of Ribosome-recycling factor from Staphylococcus aureus (strain Mu3 / ATCC 700698).